The primary structure comprises 367 residues: Cobalt-precorrin-5B C(1)-methyltransferase (367 aa).

The protein belongs to the CbiD family.

The enzyme catalyses Co-precorrin-5B + S-adenosyl-L-methionine = Co-precorrin-6A + S-adenosyl-L-homocysteine. It functions in the pathway cofactor biosynthesis; adenosylcobalamin biosynthesis; cob(II)yrinate a,c-diamide from sirohydrochlorin (anaerobic route): step 6/10. Functionally, catalyzes the methylation of C-1 in cobalt-precorrin-5B to form cobalt-precorrin-6A. The sequence is that of Cobalt-precorrin-5B C(1)-methyltransferase from Priestia megaterium (Bacillus megaterium).